The primary structure comprises 405 residues: Glucose-1-phosphate adenylyltransferase 1 (405 aa).

Alpha-D-glucose 1-phosphate contacts are provided by residues Tyr-96, Gly-161, 176-177 (EK), and Ser-194.

The protein belongs to the bacterial/plant glucose-1-phosphate adenylyltransferase family. In terms of assembly, homotetramer.

The catalysed reaction is alpha-D-glucose 1-phosphate + ATP + H(+) = ADP-alpha-D-glucose + diphosphate. It functions in the pathway glycan biosynthesis; glycogen biosynthesis. Its function is as follows. Involved in the biosynthesis of ADP-glucose, a building block required for the elongation reactions to produce glycogen. Catalyzes the reaction between ATP and alpha-D-glucose 1-phosphate (G1P) to produce pyrophosphate and ADP-Glc. This Vibrio vulnificus (strain YJ016) protein is Glucose-1-phosphate adenylyltransferase 1.